Reading from the N-terminus, the 279-residue chain is Cholesterol 25-hydroxylase-like protein 2 (279 aa).

N-linked (GlcNAc...) asparagine glycosylation is found at N6 and N13. 3 membrane-spanning segments follow: residues 36–56, 86–106, and 120–140; these read LFPV…YTVL, LALT…AQWL, and LTAF…QYYL. The region spanning 128-262 is the Fatty acid hydroxylase domain; that stretch reads VGCTVVFDFQ…FAHWDWLGGT (135 aa). The Histidine box-1 motif lies at 141–145; sequence WHLLH. Positions 156–160 match the Histidine box-2 motif; sequence HALHH. A run of 2 transmembrane segments spans residues 165–185 and 189–209; these read TFSL…GFWT and PLLL…NIWV. Positions 237–243 match the Histidine box-3 motif; it reads RHDAHHQ.

It belongs to the sterol desaturase family. The cofactor is Fe cation.

It is found in the endoplasmic reticulum membrane. Functionally, may catalyze the formation of 25-hydroxycholesterol from cholesterol. The polypeptide is Cholesterol 25-hydroxylase-like protein 2 (Danio rerio (Zebrafish)).